The primary structure comprises 194 residues: DNA replication complex GINS protein PSF3 (194 aa).

This sequence belongs to the GINS3/PSF3 family. Component of the GINS complex which is a heterotetramer of SLD5, PSF1, PSF2 and PSF3.

The protein localises to the nucleus. Its function is as follows. Functions as part of the GINS complex which plays an essential role in the initiation of DNA replication by binding to DNA replication origins and facilitating the assembly of the DNA replication machinery. This Saccharomyces cerevisiae (strain ATCC 204508 / S288c) (Baker's yeast) protein is DNA replication complex GINS protein PSF3.